A 358-amino-acid polypeptide reads, in one-letter code: Peptide chain release factor 1 (358 aa).

Gln233 is subject to N5-methylglutamine.

This sequence belongs to the prokaryotic/mitochondrial release factor family. Post-translationally, methylated by PrmC. Methylation increases the termination efficiency of RF1.

The protein resides in the cytoplasm. Its function is as follows. Peptide chain release factor 1 directs the termination of translation in response to the peptide chain termination codons UAG and UAA. The chain is Peptide chain release factor 1 from Lysinibacillus sphaericus (strain C3-41).